A 367-amino-acid polypeptide reads, in one-letter code: Inactive serine protease 39 (367 aa).

A signal peptide spans 1 to 31; that stretch reads MWGSRAQQSGPDRGGACLLAAFLLCFSLLHA. Residues 68-312 form the Peptidase S1 domain; the sequence is IYGGQIAKAE…FSDWIKQKKA (245 aa). 4 disulfide bridges follow: Cys93–Cys109, Cys192–Cys269, Cys225–Cys248, and Cys259–Cys287.

It belongs to the peptidase S1 family. Expressed in testis. More specifically, abundantly expressed in the haploid round spermatid.

It localises to the cytoplasmic vesicle. Its subcellular location is the secretory vesicle. The protein resides in the acrosome. It is found in the secreted. In terms of biological role, may play an important role in the sperm/egg interaction; released during the acrosome reaction. This is Inactive serine protease 39 (Prss39) from Mus musculus (Mouse).